Reading from the N-terminus, the 1056-residue chain is Multidrug resistance protein MdtB (1056 aa).

A run of 12 helical transmembrane segments spans residues 16 to 36 (FILRPVATTLFMIAILLAGII), 342 to 362 (DVQFELLLAIALVVMVIYVFL), 373 to 393 (IAVPLSLVGTFAVMYFCGFSV), 396 to 416 (LTLMALTIAAGFVVDDAIVVI), 440 to 460 (IGFTIISLTFSLIAVLIPLLF), 472 to 492 (FAITLAVAILISAVVSLTLTP), 537 to 557 (WITLGVAFSTLAFTALLYLTI), 869 to 889 (LILAAVISMYIVLGILYESFI), 890 to 910 (HPVTILSTLPTAGVGALLALM), 911 to 931 (VGGYELDIIAIIGIILLIGIV), 968 to 988 (ILMTTMAALLGALPLMLSTGI), and 1002 to 1022 (GGLIMSQILTLFTTPVIYLLF). A disordered region spans residues 1037-1056 (LQSQNQRELDHSPVNHQEPL). Positions 1043 to 1056 (RELDHSPVNHQEPL) are enriched in basic and acidic residues.

The protein belongs to the resistance-nodulation-cell division (RND) (TC 2.A.6) family. MdtB subfamily. In terms of assembly, part of a tripartite efflux system composed of MdtA, MdtB and MdtC. MdtB forms a heteromultimer with MdtC.

The protein localises to the cell inner membrane. This chain is Multidrug resistance protein MdtB, found in Xenorhabdus bovienii (strain SS-2004) (Xenorhabdus nematophila subsp. bovienii).